A 670-amino-acid polypeptide reads, in one-letter code: Probable ATP-citrate synthase subunit 1 (670 aa).

Residues 1 to 22 (MPSATTASTNGANGASASPAPG) are disordered. Residues 257–277 (LLRYQADPDCKILVLLGEVGG) and 308–334 (FKTEVQFGHAGAFANSQLETAATKNKS) each bind ATP. Glu-274 lines the Mg(2+) pocket. The Tele-phosphohistidine intermediate role is filled by His-316. A CoA-binding site is contributed by 335-345 (MREAGFYVPDT).

Belongs to the succinate/malate CoA ligase alpha subunit family. Composed of two subunits.

The protein localises to the cytoplasm. The catalysed reaction is oxaloacetate + acetyl-CoA + ADP + phosphate = citrate + ATP + CoA. Catalyzes the formation of cytosolic acetyl-CoA, which is mainly used for the biosynthesis of fatty acids and sterols. In Neurospora crassa (strain ATCC 24698 / 74-OR23-1A / CBS 708.71 / DSM 1257 / FGSC 987), this protein is Probable ATP-citrate synthase subunit 1.